Here is a 377-residue protein sequence, read N- to C-terminus: MKNTIINLAQDLIRRPSISPDDQGCQQVIAERLTKLGFNIEWMSFNDTINLWAKHGTTSPVVAFAGHTDVVPTGDENQWNYPPFSAQIVDDMLYGRGAADMKGSLAAMIVAAEEYVKANPNHAGTIALLITSDEEAAAKDGTVKVVESLMARGENIDYCLVGEPSSAKQLGDVVKNGRRGSITGDLYIQGIQGHVAYPHLAENPVHKATKFLTELTTYEWDNGNEFFPPTSLQIANIHAGTGSNNVIPGELYVQFNLRYCTEVTDEFIKNKVAEMLQKHDLTYRIDWNLSGKPFLTKPGKLLNAVVESLESVAGIKPKLDTGGGTSDGRFIALMGAEVVELGPLNATIHKVNECVSCRDLATLGEVYRQMLVNLLGK.

Residue histidine 67 coordinates Zn(2+). Aspartate 69 is an active-site residue. Aspartate 100 lines the Zn(2+) pocket. Glutamate 134 (proton acceptor) is an active-site residue. Zn(2+) contacts are provided by glutamate 135, glutamate 163, and histidine 349.

Belongs to the peptidase M20A family. DapE subfamily. Homodimer. Zn(2+) is required as a cofactor. It depends on Co(2+) as a cofactor.

The enzyme catalyses N-succinyl-(2S,6S)-2,6-diaminopimelate + H2O = (2S,6S)-2,6-diaminopimelate + succinate. Its pathway is amino-acid biosynthesis; L-lysine biosynthesis via DAP pathway; LL-2,6-diaminopimelate from (S)-tetrahydrodipicolinate (succinylase route): step 3/3. Catalyzes the hydrolysis of N-succinyl-L,L-diaminopimelic acid (SDAP), forming succinate and LL-2,6-diaminopimelate (DAP), an intermediate involved in the bacterial biosynthesis of lysine and meso-diaminopimelic acid, an essential component of bacterial cell walls. The polypeptide is Succinyl-diaminopimelate desuccinylase (Mannheimia succiniciproducens (strain KCTC 0769BP / MBEL55E)).